The following is a 547-amino-acid chain: Riboflavin transporter RibJ (547 aa).

Residues 1–11 lie on the Cytoplasmic side of the membrane; sequence MLPSFTRKPAD. The helical transmembrane segment at 12 to 32 threads the bilayer; that stretch reads HPIGYLVALSGLLMQLMSYGI. The Extracellular segment spans residues 33–58; that stretch reads DNSYSIFSEDMHNDPSLGFPSITAIS. The helical transmembrane segment at 59 to 79 threads the bilayer; that stretch reads LGNSVSLGLSPAFGVLAGFCV. Residues 80 to 85 are Cytoplasmic-facing; the sequence is DRLPPR. Residues 86–106 traverse the membrane as a helical segment; that stretch reads FMMALSTILLFTGLWISSTLA. Residues 107–108 are Extracellular-facing; that stretch reads AN. A helical transmembrane segment spans residues 109–129; it reads IYVVTFTYCLFASIGTACMLS. Residues 130–144 are Cytoplasmic-facing; it reads PGAAATSSWFNRYQG. A helical transmembrane segment spans residues 145-165; that stretch reads LAMGINFAGGGIGSAIIPPLA. The Extracellular segment spans residues 166-175; sequence GKWVVAYGWR. The chain crosses the membrane as a helical span at residues 176-196; sequence KAFQLMSIFCAIGVLATALSA. Over 197 to 344 the chain is Cytoplasmic; sequence RRREPKRDDS…MFTLPFMGNF (148 aa). Residues 198-293 form a disordered region; the sequence is RREPKRDDSS…EGLDVTEQSQ (96 aa). Positions 244 to 255 are enriched in basic and acidic residues; that stretch reads NEGKEDVREMGR. The helical transmembrane segment at 345 to 365 threads the bilayer; it reads LCWFIYSWAFYSLIYAAVPYI. At 366–386 the chain is on the extracellular side; that stretch reads SSMGKPGTVYAGVPPIPTDVA. Residues 387–407 traverse the membrane as a helical segment; that stretch reads ATLFTFYGVFQVVGSVLVGWL. Residues 408–412 are Cytoplasmic-facing; it reads ASLVT. The chain crosses the membrane as a helical span at residues 413–433; sequence AEFAYVFCATVGGIGCGLLAL. Residues 434 to 437 are Extracellular-facing; sequence GRSY. Residues 438–458 traverse the membrane as a helical segment; the sequence is VAFALLLCIIGFCMAGMFAVM. The Cytoplasmic segment spans residues 459-470; that stretch reads PTLIATHLYGPN. Residues 471 to 491 form a helical membrane-spanning segment; the sequence is LGFYFGAVFLAGVVGGFVAPP. The Extracellular portion of the chain corresponds to 492-505; the sequence is MQATIQLRNNGSYA. The N-linked (GlcNAc...) asparagine glycan is linked to Asn501. Residues 506 to 526 form a helical membrane-spanning segment; that stretch reads FVCVVMSVSMTLSALVCYATL. The Cytoplasmic segment spans residues 527–547; sequence WRSKRSGIVLAARKTKLVEIM.

It belongs to the major facilitator superfamily. RibJ family.

It localises to the cell membrane. Its function is as follows. Transporter involved in riboflavin (vitamin B2) uptake. Also transports FMN and FAD. The sequence is that of Riboflavin transporter RibJ from Trypanosoma brucei brucei (strain 927/4 GUTat10.1).